A 420-amino-acid polypeptide reads, in one-letter code: Pyrophosphate--fructose 6-phosphate 1-phosphotransferase (420 aa).

Residue glycine 13 participates in diphosphate binding. Residues 142–144, 190–192, glutamate 247, and 297–300 contribute to the substrate site; these read TVD, MGR, and YLQR. Aspartate 144 (proton acceptor) is an active-site residue.

This sequence belongs to the phosphofructokinase type A (PFKA) family. PPi-dependent PFK group II subfamily. Clade 'B2' sub-subfamily. As to quaternary structure, homodimer. Mg(2+) serves as cofactor. The cofactor is Co(2+). Requires Mn(2+) as cofactor.

It localises to the cytoplasm. The catalysed reaction is beta-D-fructose 6-phosphate + diphosphate = beta-D-fructose 1,6-bisphosphate + phosphate + H(+). It functions in the pathway carbohydrate degradation; glycolysis; D-glyceraldehyde 3-phosphate and glycerone phosphate from D-glucose: step 3/4. Non-allosteric. In terms of biological role, catalyzes the phosphorylation of D-fructose 6-phosphate, the first committing step of glycolysis. Uses inorganic phosphate (PPi) as phosphoryl donor instead of ATP like common ATP-dependent phosphofructokinases (ATP-PFKs), which renders the reaction reversible, and can thus function both in glycolysis and gluconeogenesis. Consistently, PPi-PFK can replace the enzymes of both the forward (ATP-PFK) and reverse (fructose-bisphosphatase (FBPase)) reactions. In Methylococcus capsulatus (strain ATCC 33009 / NCIMB 11132 / Bath), this protein is Pyrophosphate--fructose 6-phosphate 1-phosphotransferase.